The chain runs to 2606 residues: Large tegument protein deneddylase (2606 aa).

Residues 1–235 (MAFQAQTDTG…LKRSGAYVNL (235 aa)) are deubiquitination activity. Residues 14 to 225 (LATASSHQGD…LLANYGIASA (212 aa)) form the Peptidase C76 domain. Residues C34, D163, and H165 contribute to the active site. 5 disordered regions span residues 318-349 (IAISPLHSNTESDDSETGKKNTPVKITKPNEA), 390-411 (DTDSLLSTHESPPATPSLKSGQ), 1020-1135 (KKGL…ESSE), 2253-2316 (PEIH…PTPL), and 2434-2458 (PPHDFVEPVENGDPPGPPGSEERKY). Over residues 1038 to 1050 (TPVTDSKLIQDSQ) the composition is skewed to polar residues. Residues 1051–1061 (QNDRHQKEKPL) are compositionally biased toward basic and acidic residues. Residues 1085–1097 (KPQNLSLPVSTNK) are compositionally biased toward polar residues. Over residues 1105 to 1132 (ESSPIESTSPSHSPVSSMESQNGSFSLE) the composition is skewed to low complexity. Residues 2304-2316 (PNPPRPTTFPTPL) are compositionally biased toward pro residues.

This sequence belongs to the herpesviridae large tegument protein family. As to quaternary structure, interacts with host CUL1 and CUL4A; these interactions inhibit the E3 ligase activity of cullins. Interacts with inner tegument protein. Interacts with capsid vertex specific component CVC2. Interacts with the major capsid protein/MCP.

It localises to the virion tegument. Its subcellular location is the host cytoplasm. It is found in the host nucleus. The enzyme catalyses Thiol-dependent hydrolysis of ester, thioester, amide, peptide and isopeptide bonds formed by the C-terminal Gly of ubiquitin (a 76-residue protein attached to proteins as an intracellular targeting signal).. Its function is as follows. Large tegument protein that plays multiple roles in the viral cycle. During viral entry, remains associated with the capsid while most of the tegument is detached and participates in the capsid transport toward the host nucleus. Plays a role in the routing of the capsid at the nuclear pore complex and subsequent uncoating. Within the host nucleus, acts as a deneddylase and promotes the degradation of nuclear CRLs (cullin-RING ubiquitin ligases) and thereby stabilizes nuclear CRL substrates, while cytoplasmic CRLs remain unaffected. These modifications prevent host cell cycle S-phase progression and create a favorable environment allowing efficient viral genome replication. Participates later in the secondary envelopment of capsids. Indeed, plays a linker role for the association of the outer viral tegument to the capsids together with the inner tegument protein. This Connochaetes taurinus (Blue wildebeest) protein is Large tegument protein deneddylase (64).